A 284-amino-acid polypeptide reads, in one-letter code: Hydrogenase expression/formation protein HupQ (284 aa).

The disordered stretch occupies residues 1–23 (MIGTQSILPPGFGPGSHGEEDRL).

Belongs to the HupH/HyaF family.

The polypeptide is Hydrogenase expression/formation protein HupQ (hupQ) (Azotobacter chroococcum mcd 1).